We begin with the raw amino-acid sequence, 644 residues long: Chaperone protein DnaK (644 aa).

Threonine 199 is modified (phosphothreonine; by autocatalysis). Positions 605-644 (KKSSEGQAAQGQTQSQESTKPVEEGVVDAEFEEVKEEDKK) are disordered. The segment covering 609 to 623 (EGQAAQGQTQSQEST) has biased composition (polar residues). Over residues 629–644 (GVVDAEFEEVKEEDKK) the composition is skewed to acidic residues.

It belongs to the heat shock protein 70 family.

Its function is as follows. Acts as a chaperone. The chain is Chaperone protein DnaK from Legionella pneumophila (strain Paris).